The sequence spans 189 residues: 3-hydroxyanthranilate 3,4-dioxygenase (189 aa).

Arginine 46 provides a ligand contact to O2. 3 residues coordinate Fe cation: histidine 50, glutamate 56, and histidine 94. Glutamate 56 serves as a coordination point for substrate. Substrate contacts are provided by arginine 98 and glutamate 109. Fe cation-binding residues include cysteine 124, cysteine 127, cysteine 161, and cysteine 164.

It belongs to the 3-HAO family. In terms of assembly, homodimer. Fe(2+) serves as cofactor.

The catalysed reaction is 3-hydroxyanthranilate + O2 = (2Z,4Z)-2-amino-3-carboxymuconate 6-semialdehyde. Its pathway is cofactor biosynthesis; NAD(+) biosynthesis; quinolinate from L-kynurenine: step 3/3. Its function is as follows. Catalyzes the oxidative ring opening of 3-hydroxyanthranilate to 2-amino-3-carboxymuconate semialdehyde, which spontaneously cyclizes to quinolinate. This is 3-hydroxyanthranilate 3,4-dioxygenase from Shewanella woodyi (strain ATCC 51908 / MS32).